We begin with the raw amino-acid sequence, 409 residues long: L-cysteine:1D-myo-inositol 2-amino-2-deoxy-alpha-D-glucopyranoside ligase (409 aa).

A Zn(2+)-binding site is contributed by cysteine 25. L-cysteinyl-5'-AMP contacts are provided by residues 25-28 (CGIT), threonine 40, and 63-65 (NVT). The 'HIGH' region signature appears at 27–37 (ITPYDATHIGH). Positions 179 to 184 (ERGGDP) match the 'ERGGDP' region motif. L-cysteinyl-5'-AMP is bound at residue tryptophan 219. Cysteine 223 lines the Zn(2+) pocket. 241–243 (GSD) lines the L-cysteinyl-5'-AMP pocket. Histidine 248 provides a ligand contact to Zn(2+). Valine 274 is a binding site for L-cysteinyl-5'-AMP. The 'KMSKS' region motif lies at 280-284 (KMSKS).

Belongs to the class-I aminoacyl-tRNA synthetase family. MshC subfamily. In terms of assembly, monomer. It depends on Zn(2+) as a cofactor.

The enzyme catalyses 1D-myo-inositol 2-amino-2-deoxy-alpha-D-glucopyranoside + L-cysteine + ATP = 1D-myo-inositol 2-(L-cysteinylamino)-2-deoxy-alpha-D-glucopyranoside + AMP + diphosphate + H(+). In terms of biological role, catalyzes the ATP-dependent condensation of GlcN-Ins and L-cysteine to form L-Cys-GlcN-Ins. The chain is L-cysteine:1D-myo-inositol 2-amino-2-deoxy-alpha-D-glucopyranoside ligase from Clavibacter sepedonicus (Clavibacter michiganensis subsp. sepedonicus).